A 776-amino-acid chain; its full sequence is DExH-box ATP-dependent RNA helicase DExH18, mitochondrial (776 aa).

The N-terminal 84 residues, 1 to 84 (MARGVAGVLR…RSFSSTVDNN (84 aa)), are a transit peptide targeting the mitochondrion. The segment at 80-101 (TVDNNGENDDIEESVGSESDDY) is disordered. Residues 85–101 (GENDDIEESVGSESDDY) show a composition bias toward acidic residues. One can recognise a Helicase ATP-binding domain in the interval 268–426 (FARAMKRKIV…RFKPLVVEAK (159 aa)). 281–288 (GPTNSGKT) lines the ATP pocket. The DEIH box; degenerate motif lies at 361 to 364 (DEIQ). A Helicase C-terminal domain is found at 427–595 (TLLGELKNVK…LFAAQVPDMA (169 aa)).

This sequence belongs to the DExH box helicase family. Homodimer; in free form. Component of the mitochondrial degradosome (mtEXO) complex which is a heteropentamer containing 2 copies of SUPV3L1 and 3 copies of PNPT1. Mg(2+) is required as a cofactor. It depends on Mn(2+) as a cofactor.

Its subcellular location is the nucleus. It is found in the mitochondrion matrix. It localises to the mitochondrion nucleoid. The enzyme catalyses ATP + H2O = ADP + phosphate + H(+). Functionally, major helicase player in mitochondrial RNA metabolism. Component of the mitochondrial degradosome (mtEXO) complex, that degrades 3' overhang double-stranded RNA with a 3'-to-5' directionality in an ATP-dependent manner. ATPase and ATP-dependent multisubstrate helicase, able to unwind double-stranded (ds) DNA and RNA, and RNA/DNA heteroduplexes in the 5'-to-3' direction. Plays a role in the RNA surveillance system in mitochondria; regulates the stability of mature mRNAs, the removal of aberrantly formed mRNAs and the rapid degradation of non coding processing intermediates. The sequence is that of DExH-box ATP-dependent RNA helicase DExH18, mitochondrial from Arabidopsis thaliana (Mouse-ear cress).